The following is a 3078-amino-acid chain: Homeobox-like protein HDP1 (3078 aa).

10 disordered regions span residues 1 to 29, 59 to 164, 203 to 306, 949 to 980, 1323 to 1390, 1415 to 1445, 1939 to 2046, 2115 to 2216, 2599 to 2637, and 2959 to 3019; these read MKRG…DNSN, LHNS…INDN, SKRK…NIGK, NAEI…QDEN, DEDS…KDRK, SSSN…NNKN, KVND…QDKF, TNES…QYNY, AYMN…DDNI, and QQNN…NNGP. Residues 14–29 are compositionally biased toward polar residues; that stretch reads CPSNGMASSQRNDNSN. Over residues 59–84 the composition is skewed to basic and acidic residues; the sequence is LHNSSSRESKDMKLSEEPRHINEKCI. Composition is skewed to low complexity over residues 85 to 94 and 114 to 127; these read NDNNKINNNN and NNNN…TKNN. Polar residues-rich tracts occupy residues 128–137, 148–157, 209–229, 237–252, and 949–960; these read IFFQTNNPDT, KQENTSSSLH, NSNN…NNIT, TSSI…NTVH, and NAEIHESNSPNH. The segment covering 1368 to 1380 has biased composition (basic residues); the sequence is RKNKINRGSKGKH. Low complexity predominate over residues 1415–1433; sequence SSSNYEEGNSSSNEENNIS. Residues 1434–1445 are compositionally biased toward polar residues; sequence TDKNISNTNNKN. Positions 1939–1993 are enriched in low complexity; that stretch reads KVNDSNNSNDANEGNNANYSNDSSNTNNNTSSSTNNSNNNTSCSSQNTTTSSENN. Basic and acidic residues-rich tracts occupy residues 2012-2021 and 2029-2046; these read KDTQKEKNNL and YEDR…QDKF. Over residues 2115 to 2126 the composition is skewed to polar residues; sequence TNESIKTNSDQN. Low complexity predominate over residues 2139–2160; it reads MNNDNYNSSYDNVHNDNDNNMV. The segment covering 2163–2177 has biased composition (basic and acidic residues); that stretch reads DSSRQDNMEKQKSGE. Residues 2192 to 2201 are compositionally biased toward acidic residues; it reads NDNDNDDNND. Low complexity-rich tracts occupy residues 2202 to 2216, 2602 to 2630, and 2959 to 2989; these read NDNN…QYNY, NDNN…YSYD, and QQNN…QKNN. Polar residues predominate over residues 2990-3006; sequence LSEVQVSNINTPSSYNI. The interval 2991-3078 is DNA-binding; sequence SEVQVSNINT…GKRRKNEDNK (88 aa).

Homodimer.

The protein resides in the nucleus. The protein localises to the chromosome. Functionally, transcriptional regulator which binds to the DNA motifs 5'-GTGCACAC-3' (motif A) and 5'-[GTA]TGTA[CT][GA]TAC-3' (motif B) of genes essential for early gametocyte development, including those critical for the expansion of the inner membrane complex (IMC). The polypeptide is Homeobox-like protein HDP1 (Plasmodium falciparum (isolate NF54)).